The following is a 673-amino-acid chain: Hemocyanin subunit C (673 aa).

A signal peptide spans methionine 1–alanine 20. 3 residues coordinate Cu cation: histidine 207, histidine 211, and histidine 237. Residue asparagine 323 is glycosylated (N-linked (GlcNAc...) asparagine). Cu cation-binding residues include histidine 358, histidine 362, and histidine 398. An intrachain disulfide couples cysteine 568 to cysteine 616.

The protein belongs to the tyrosinase family. Hemocyanin subfamily. 36-chain polymer consisting of 6 hexamers, each of which includes 4 different chains, A, B, C and D. Hemolymph.

The protein resides in the secreted. It localises to the extracellular space. Functionally, hemocyanins are copper-containing oxygen carriers occurring freely dissolved in the hemolymph of many mollusks and arthropods. In Scutigera coleoptrata (House centipede), this protein is Hemocyanin subunit C (HCC).